The primary structure comprises 318 residues: Acetyl-coenzyme A carboxylase carboxyl transferase subunit alpha (318 aa).

In terms of domain architecture, CoA carboxyltransferase C-terminal spans 38–292; that stretch reads KLEKRLAKLE…NKTITKSLHA (255 aa).

It belongs to the AccA family. In terms of assembly, acetyl-CoA carboxylase is a heterohexamer composed of biotin carboxyl carrier protein (AccB), biotin carboxylase (AccC) and two subunits each of ACCase subunit alpha (AccA) and ACCase subunit beta (AccD).

Its subcellular location is the cytoplasm. The catalysed reaction is N(6)-carboxybiotinyl-L-lysyl-[protein] + acetyl-CoA = N(6)-biotinyl-L-lysyl-[protein] + malonyl-CoA. It participates in lipid metabolism; malonyl-CoA biosynthesis; malonyl-CoA from acetyl-CoA: step 1/1. Functionally, component of the acetyl coenzyme A carboxylase (ACC) complex. First, biotin carboxylase catalyzes the carboxylation of biotin on its carrier protein (BCCP) and then the CO(2) group is transferred by the carboxyltransferase to acetyl-CoA to form malonyl-CoA. The chain is Acetyl-coenzyme A carboxylase carboxyl transferase subunit alpha from Listeria monocytogenes serovar 1/2a (strain ATCC BAA-679 / EGD-e).